The primary structure comprises 389 residues: Chalcone synthase 8 (389 aa).

Residue cysteine 164 is part of the active site.

It belongs to the thiolase-like superfamily. Chalcone/stilbene synthases family.

The catalysed reaction is (E)-4-coumaroyl-CoA + 3 malonyl-CoA + 3 H(+) = 2',4,4',6'-tetrahydroxychalcone + 3 CO2 + 4 CoA. The protein operates within secondary metabolite biosynthesis; flavonoid biosynthesis. The primary product of this enzyme is 4,2',4',6'-tetrahydroxychalcone (also termed naringenin-chalcone or chalcone) which can under specific conditions spontaneously isomerize into naringenin. This is Chalcone synthase 8 (CHS8) from Medicago sativa (Alfalfa).